A 299-amino-acid chain; its full sequence is UDP-N-acetylenolpyruvoylglucosamine reductase (299 aa).

An FAD-binding PCMH-type domain is found at 28 to 193 (KVGGPADILA…LSAKFELQAG (166 aa)). Residue arginine 172 is part of the active site. Serine 222 serves as the catalytic Proton donor. Glutamate 292 is an active-site residue.

Belongs to the MurB family. FAD is required as a cofactor.

The protein localises to the cytoplasm. It carries out the reaction UDP-N-acetyl-alpha-D-muramate + NADP(+) = UDP-N-acetyl-3-O-(1-carboxyvinyl)-alpha-D-glucosamine + NADPH + H(+). The protein operates within cell wall biogenesis; peptidoglycan biosynthesis. In terms of biological role, cell wall formation. In Lactococcus lactis subsp. cremoris (strain SK11), this protein is UDP-N-acetylenolpyruvoylglucosamine reductase.